The sequence spans 424 residues: Adenylosuccinate synthetase (424 aa).

Residues 12 to 18 and 40 to 42 each bind GTP; these read GDEGKGK and GHT. The active-site Proton acceptor is Asp13. 2 residues coordinate Mg(2+): Asp13 and Gly40. IMP is bound by residues 13-16, 38-41, Thr130, Arg144, Asn220, Thr235, and Arg299; these read DEGK and NAGH. The Proton donor role is filled by His41. 295 to 301 lines the substrate pocket; that stretch reads VTTGRRR. GTP is bound by residues Arg301, 327 to 329, and 412 to 414; these read KLD and GTG.

Belongs to the adenylosuccinate synthetase family. Homodimer. The cofactor is Mg(2+).

It localises to the cytoplasm. The catalysed reaction is IMP + L-aspartate + GTP = N(6)-(1,2-dicarboxyethyl)-AMP + GDP + phosphate + 2 H(+). It functions in the pathway purine metabolism; AMP biosynthesis via de novo pathway; AMP from IMP: step 1/2. In terms of biological role, plays an important role in the de novo pathway and in the salvage pathway of purine nucleotide biosynthesis. Catalyzes the first committed step in the biosynthesis of AMP from IMP. The protein is Adenylosuccinate synthetase of Aspergillus clavatus (strain ATCC 1007 / CBS 513.65 / DSM 816 / NCTC 3887 / NRRL 1 / QM 1276 / 107).